Consider the following 2364-residue polypeptide: Cytotoxin-L (2364 aa).

A four-helical bundle region spans residues 1–91 (MNLVNKAQLQ…EVLELKNNSL (91 aa)). Residues 96-468 (KNLHFIWIGG…APDVRSTINL (373 aa)) form the GT44 domain. The tract at residues 96–468 (KNLHFIWIGG…APDVRSTINL (373 aa)) is glucosyltransferase region. UDP-alpha-D-glucose is bound by residues 101-103 (IWI), N139, 265-270 (LAAASD), and 286-288 (DVD). Mg(2+) is bound by residues D288, E515, and S518. UDP-alpha-D-glucose is bound at residue 518–520 (SLW). Residues 544 to 799 (GEDDNLDFAQ…KSKYLHELST (256 aa)) are autoprocessing region. Residues E545 and D546 each contribute to the Zn(2+) site. Positions 567-774 (LSSMKTRNKE…EESIIKDISS (208 aa)) constitute a Peptidase C80 domain. 1D-myo-inositol hexakisphosphate-binding residues include Y577, K600, and K647. H653 contacts Zn(2+). H653 functions as the For protease activity in the catalytic mechanism. C698 acts as the Nucleophile; for protease activity in catalysis. H757 is a binding site for Zn(2+). 1D-myo-inositol hexakisphosphate contacts are provided by K764, K775, and K792. The interval 800–1500 (LLQEIRNNAN…ESIIRNIYMP (701 aa)) is translocation region. Interaction with host SEMA6A and SEMA6B regions lie at residues 1433-1438 (CMKLIE), 1466-1471 (DNETKY), 1484-1495 (FTAEFSNESIIR), 1504-1511 (NLFIYSSK), and 1596-1601 (YNNLDP). 20 Cell wall-binding repeats span residues 1813 to 1832 (EFGL…FGNM), 1833 to 1852 (VSGL…PKNN), 1854 to 1873 (ITGF…TKSG), 1876 to 1895 (SIGE…QGIL), 1926 to 1945 (FIGK…NYRA), 1946 to 1965 (AVEW…KTGE), 1967 to 1986 (LKGL…NGIM), 1987 to 2006 (QTGF…DGVM), 2007 to 2026 (QVGY…NGER), 2057 to 2076 (YNGI…SNTA), 2077 to 2097 (VVGW…NTAE), 2099 to 2118 (CIGL…NGIR), 2119 to 2138 (QLGF…SGKI), 2139 to 2158 (ELGY…SGLV), 2209 to 2224 (ETGW…YFDP), 2227 to 2249 (KKAY…NGIM), 2250 to 2269 (RTGL…DGKM), 2270 to 2289 (QFGY…DGKM), 2320 to 2339 (YTGW…EYIA), and 2340 to 2359 (ATGS…DTAE). The receptor-binding (CROPS) region stretch occupies residues 1835-2364 (GLIYINDSLY…PDTAELVVSE (530 aa)).

The protein belongs to the clostridial glucosylating toxin (LCGT) family. As to quaternary structure, homomultimer; forms an inactive homomultimer at pH 8, which dissociates at pH 4, leading to cytotoxicity. Interacts with host SEMA6A; interaction promotes toxin entry into host cell. Interacts with host SEMA6B; interaction promotes toxin entry into host cell. The cofactor is Zn(2+). Requires Mn(2+) as cofactor. It depends on Mg(2+) as a cofactor. Undergoes autocatalytic cleavage to release the N-terminal part (Glucosyltransferase TcsL), which constitutes the active part of the toxin, in the host cytosol. 1D-myo-inositol hexakisphosphate-binding (InsP6) activates the peptidase C80 domain and promotes autoprocessing.

The protein resides in the secreted. It is found in the host endosome membrane. Its subcellular location is the host cytoplasm. The protein localises to the host cytosol. It localises to the host cell membrane. It carries out the reaction L-threonyl-[protein] + UDP-alpha-D-glucose = 3-O-(alpha-D-glucosyl)-L-threonyl-[protein] + UDP + H(+). Protease activity is activated upon binding to 1D-myo-inositol hexakisphosphate (InsP6), which induces conformational reorganization. Its function is as follows. Precursor of a cytotoxin that targets the vascular endothelium, inducing an anti-inflammatory effect and resulting in lethal toxic shock syndrome. TcsL constitutes the main toxin that mediates the pathology of P.sordellii infection, an anaerobic Gram-positive bacterium found in soil and in the gastrointestinal and vaginal tracts of animals and humans; although the majority of carriers are asymptomatic, pathogenic P.sordellii infections arise rapidly and are highly lethal. This form constitutes the precursor of the toxin: it enters into host cells and mediates autoprocessing to release the active toxin (Glucosyltransferase TcsL) into the host cytosol. Targets vascular endothelium by binding to the semaphorin proteins SEMA6A and SEMA6B, and enters host cells via clathrin-mediated endocytosis. Once entered into host cells, acidification in the endosome promotes the membrane insertion of the translocation region and formation of a pore, leading to translocation of the GT44 and peptidase C80 domains across the endosomal membrane. This activates the peptidase C80 domain and autocatalytic processing, releasing the N-terminal part (Glucosyltransferase TcsL), which constitutes the active part of the toxin, in the cytosol. Active form of the toxin, which is released into the host cytosol following autoprocessing and inactivates small GTPases. Acts by mediating monoglucosylation of small GTPases of the Ras (H-Ras/HRAS, K-Ras/KRAS and N-Ras/NRAS) family in host cells at the conserved threonine residue located in the switch I region ('Thr-37/35'), using UDP-alpha-D-glucose as the sugar donor. Also able to catalyze monoglucosylation of some members of the Rho family (Rac1 and Rap2A), but with less efficiency than with Ras proteins. Monoglucosylation of host small GTPases completely prevents the recognition of the downstream effector, blocking the GTPases in their inactive form and leading to apoptosis. Induces an anti-inflammatory effect, mainly by inactivating Ras proteins which results in blockage of the cell cycle and killing of immune cells. The absence or moderate local inflammatory response allows C.sordellii spreading in deep tissues, production of toxin which is released in the general circulation and causes a toxic shock syndrome. This Paraclostridium sordellii (strain ATCC 9714 / DSM 2141 / JCM 3814 / LMG 15708 / NCIMB 10717 / 211) (Clostridium sordellii) protein is Cytotoxin-L.